The primary structure comprises 349 residues: Cobalt-precorrin-5B C(1)-methyltransferase (349 aa).

Belongs to the CbiD family.

It catalyses the reaction Co-precorrin-5B + S-adenosyl-L-methionine = Co-precorrin-6A + S-adenosyl-L-homocysteine. The protein operates within cofactor biosynthesis; adenosylcobalamin biosynthesis; cob(II)yrinate a,c-diamide from sirohydrochlorin (anaerobic route): step 6/10. Catalyzes the methylation of C-1 in cobalt-precorrin-5B to form cobalt-precorrin-6A. The chain is Cobalt-precorrin-5B C(1)-methyltransferase from Saccharolobus islandicus (strain Y.N.15.51 / Yellowstone #2) (Sulfolobus islandicus).